Consider the following 432-residue polypeptide: Argininosuccinate lyase (432 aa).

The protein belongs to the lyase 1 family. Argininosuccinate lyase subfamily.

Its subcellular location is the cytoplasm. The enzyme catalyses 2-(N(omega)-L-arginino)succinate = fumarate + L-arginine. It functions in the pathway amino-acid biosynthesis; L-arginine biosynthesis; L-arginine from L-ornithine and carbamoyl phosphate: step 3/3. In Xanthomonas axonopodis pv. citri (strain 306), this protein is Argininosuccinate lyase.